The sequence spans 128 residues: Small ribosomal subunit protein bS6 (128 aa).

The disordered stretch occupies residues 100-128 (SPMAKAKEERFTRRDDERREEATEAASEE). Residues 104 to 121 (KAKEERFTRRDDERREEA) are compositionally biased toward basic and acidic residues.

The protein belongs to the bacterial ribosomal protein bS6 family.

Binds together with bS18 to 16S ribosomal RNA. This is Small ribosomal subunit protein bS6 from Aeromonas hydrophila subsp. hydrophila (strain ATCC 7966 / DSM 30187 / BCRC 13018 / CCUG 14551 / JCM 1027 / KCTC 2358 / NCIMB 9240 / NCTC 8049).